A 229-amino-acid chain; its full sequence is Large ribosomal subunit protein uL1 (229 aa).

The protein belongs to the universal ribosomal protein uL1 family. As to quaternary structure, part of the 50S ribosomal subunit.

Functionally, binds directly to 23S rRNA. The L1 stalk is quite mobile in the ribosome, and is involved in E site tRNA release. Its function is as follows. Protein L1 is also a translational repressor protein, it controls the translation of the L11 operon by binding to its mRNA. This Bifidobacterium animalis subsp. lactis (strain AD011) protein is Large ribosomal subunit protein uL1.